The following is a 417-amino-acid chain: Phosphoglycerate kinase (417 aa).

Val23, Asp24, Phe25, Asn26, Gln38, Arg39, Ser62, His63, Gly65, Arg66, Leu121, Arg122, His169, and Arg170 together coordinate (2R)-3-phosphoglycerate. Gly213 contributes to the ADP binding site. Gly213 lines the CDP pocket. The AMP site is built by Ala214 and Lys215. Ala214 is an ATP binding site. Ala214 is a binding site for Mg(2+). Position 218 (Asp218) interacts with CDP. Asp218 is a Mg(2+) binding site. Position 219 (Lys219) interacts with AMP. Lys219 is an ATP binding site. Residue Gly237 coordinates ADP. Position 237 (Gly237) interacts with CDP. Residues Gly238 and Gly312 each contribute to the AMP site. Gly238 and Gly312 together coordinate ATP. Gly337 and Phe342 together coordinate CDP. Phe342 contacts ADP. Glu343 is an AMP binding site. Residues Glu343, Asp374, and Thr375 each coordinate ATP. Asp374 contributes to the Mg(2+) binding site.

The protein belongs to the phosphoglycerate kinase family. As to quaternary structure, monomer. Mg(2+) is required as a cofactor.

The protein localises to the cytoplasm. It localises to the secreted. The protein resides in the cell wall. Its subcellular location is the mitochondrion. It carries out the reaction (2R)-3-phosphoglycerate + ATP = (2R)-3-phospho-glyceroyl phosphate + ADP. Its pathway is carbohydrate degradation; glycolysis; pyruvate from D-glyceraldehyde 3-phosphate: step 2/5. Its function is as follows. Catalyzes one of the two ATP producing reactions in the glycolytic pathway via the reversible conversion of 1,3-diphosphoglycerate to 3-phosphoglycerate. Both L- and D- forms of purine and pyrimidine nucleotides can be used as substrates, but the activity is much lower on pyrimidines. Negatively regulates the biosynthesis of acetyl-CoA from pyruvate in the mitochondrion. This Candida albicans (strain SC5314 / ATCC MYA-2876) (Yeast) protein is Phosphoglycerate kinase (PGK1).